Consider the following 255-residue polypeptide: Enolase-phosphatase E1 (255 aa).

The Mg(2+) site is built by Asp-22 and Glu-24. Substrate contacts are provided by residues 136–137 (SS) and Lys-173. Asp-199 contributes to the Mg(2+) binding site.

The protein belongs to the HAD-like hydrolase superfamily. MasA/MtnC family. In terms of assembly, monomer. The cofactor is Mg(2+).

It is found in the cytoplasm. The protein resides in the nucleus. The enzyme catalyses 5-methylsulfanyl-2,3-dioxopentyl phosphate + H2O = 1,2-dihydroxy-5-(methylsulfanyl)pent-1-en-3-one + phosphate. It functions in the pathway amino-acid biosynthesis; L-methionine biosynthesis via salvage pathway; L-methionine from S-methyl-5-thio-alpha-D-ribose 1-phosphate: step 3/6. It participates in amino-acid biosynthesis; L-methionine biosynthesis via salvage pathway; L-methionine from S-methyl-5-thio-alpha-D-ribose 1-phosphate: step 4/6. Its function is as follows. Bifunctional enzyme that catalyzes the enolization of 2,3-diketo-5-methylthiopentyl-1-phosphate (DK-MTP-1-P) into the intermediate 2-hydroxy-3-keto-5-methylthiopentenyl-1-phosphate (HK-MTPenyl-1-P), which is then dephosphorylated to form the acireductone 1,2-dihydroxy-3-keto-5-methylthiopentene (DHK-MTPene). This Verticillium alfalfae (strain VaMs.102 / ATCC MYA-4576 / FGSC 10136) (Verticillium wilt of alfalfa) protein is Enolase-phosphatase E1.